We begin with the raw amino-acid sequence, 1038 residues long: Probable LRR receptor-like serine/threonine-protein kinase At1g53430 (1038 aa).

An N-terminal signal peptide occupies residues 1 to 28; that stretch reads MGFIFSTEKVVYVLLLIFVCLENFGSNA. At 29–609 the chain is on the extracellular side; that stretch reads QLLPEDEVQT…VDTGKPLSNG (581 aa). Residues Asn48, Asn77, Asn85, Asn112, and Asn127 are each glycosylated (N-linked (GlcNAc...) asparagine). 6 LRR repeats span residues 113–137, 139–160, 161–184, 185–208, 210–234, and 236–256; these read LTRL…LSQI, LEIL…LGDI, TTLT…LGNL, RSLK…LSNL, NLTE…NWTL, and ERLD…ISNL. 5 N-linked (GlcNAc...) asparagine glycosylation sites follow: Asn196, Asn210, Asn231, Asn255, and Asn258. LRR repeat units lie at residues 259–281, 282–305, 306–328, 330–351, and 352–374; these read LTEL…LRNL, MKMK…IGSM, SELK…TFRN, DAFN…QFII, and NSKE…SCNQ. Residues Asn339, Asn363, Asn471, and Asn561 are each glycosylated (N-linked (GlcNAc...) asparagine). The chain crosses the membrane as a helical span at residues 610–630; it reads AVAGIVIAACAVFGLLVLVIL. Topologically, residues 631–1038 are cytoplasmic; sequence RLTGYLGGKE…LDDLTDVKIE (408 aa). Thr658 carries the post-translational modification Phosphothreonine. The region spanning 669–950 is the Protein kinase domain; sequence FDPENKIGEG…EGKIKVQPPL (282 aa). Residues 675 to 683 and Lys697 contribute to the ATP site; that span reads IGEGGFGPV. Tyr742 carries the post-translational modification Phosphotyrosine. Asp795 serves as the catalytic Proton acceptor. Phosphoserine is present on Ser828. Phosphothreonine occurs at positions 829 and 834. Tyr842 bears the Phosphotyrosine mark. The disordered stretch occupies residues 984–1038; that stretch reads RNREQDISSSSMDGPWVDSSFSEPGKDVSLQQQEEGRSSSSSRKLLDDLTDVKIE. Over residues 1027-1038 the composition is skewed to basic and acidic residues; sequence KLLDDLTDVKIE.

This sequence belongs to the protein kinase superfamily. Ser/Thr protein kinase family.

It is found in the membrane. The enzyme catalyses L-seryl-[protein] + ATP = O-phospho-L-seryl-[protein] + ADP + H(+). The catalysed reaction is L-threonyl-[protein] + ATP = O-phospho-L-threonyl-[protein] + ADP + H(+). In Arabidopsis thaliana (Mouse-ear cress), this protein is Probable LRR receptor-like serine/threonine-protein kinase At1g53430.